The primary structure comprises 108 residues: Peptidyl-prolyl cis-trans isomerase FKBP1B (108 aa).

The PPIase FKBP-type domain occupies 20–108 (GQTCVVHYTG…IFGVELLNLE (89 aa)).

Belongs to the FKBP-type PPIase family. FKBP1 subfamily. As to quaternary structure, identified in a complex composed of RYR2, FKBP1B, PKA catalytic subunit, PRKAR2A, AKAP6, and the protein phosphatases PP2A and PP1. Interacts directly with RYR2.

It localises to the cytoplasm. It is found in the sarcoplasmic reticulum. It catalyses the reaction [protein]-peptidylproline (omega=180) = [protein]-peptidylproline (omega=0). Inhibited by both FK506 and rapamycin. Has the potential to contribute to the immunosuppressive and toxic effects of FK506 and rapamycin. PPIases accelerate the folding of proteins. It catalyzes the cis-trans isomerization of proline imidic peptide bonds in oligopeptides. The polypeptide is Peptidyl-prolyl cis-trans isomerase FKBP1B (FKBP1B) (Oryctolagus cuniculus (Rabbit)).